The chain runs to 246 residues: Fasciclin-like arabinogalactan protein 11 (246 aa).

Residues 1 to 24 (MATSRTFIFSNLFIFFLVIATTYG) form the signal peptide. Residues 34–179 (PTNITAILEK…LAVYQVDQVL (146 aa)) form the FAS1 domain. N-linked (GlcNAc...) asparagine glycosylation is found at asparagine 36, asparagine 68, asparagine 141, and asparagine 150. Residues 193-222 (PAPEKGGSVSKGSASGGDDGGDSTDSSDAE) are disordered. Serine 219 carries the GPI-anchor amidated serine lipid modification. A propeptide spans 220–246 (DAERTGFGFGIRITTVAAIAASSSLWI) (removed in mature form).

It belongs to the fasciclin-like AGP family. In terms of tissue distribution, expressed in the sclerenchyma cells of inflorescence stems and siliques.

Its subcellular location is the cell membrane. May be a cell surface adhesion protein. The protein is Fasciclin-like arabinogalactan protein 11 (FLA11) of Arabidopsis thaliana (Mouse-ear cress).